The following is a 235-amino-acid chain: LexA repressor (235 aa).

Residues 26 to 46 (FDEMKDALDLKSKSGIHRLIT) constitute a DNA-binding region (H-T-H motif). Residues serine 156 and lysine 194 each act as for autocatalytic cleavage activity in the active site.

This sequence belongs to the peptidase S24 family. Homodimer.

It carries out the reaction Hydrolysis of Ala-|-Gly bond in repressor LexA.. Its function is as follows. Represses a number of genes involved in the response to DNA damage (SOS response), including recA and lexA. In the presence of single-stranded DNA, RecA interacts with LexA causing an autocatalytic cleavage which disrupts the DNA-binding part of LexA, leading to derepression of the SOS regulon and eventually DNA repair. The polypeptide is LexA repressor (Paramagnetospirillum magneticum (strain ATCC 700264 / AMB-1) (Magnetospirillum magneticum)).